Consider the following 493-residue polypeptide: Dipeptide and tripeptide permease B (493 aa).

Over 1–27 (MERSTPTGLLQQPKPFFMIFFVELWER) the chain is Cytoplasmic. The chain crosses the membrane as a helical span at residues 28–48 (FGYYGVQGILAVFFVQQLGFS). Over 49-52 (QEQA) the chain is Periplasmic. Residues 53-73 (FVTFGAFAALVYGLISIGGYV) form a helical membrane-spanning segment. The Cytoplasmic segment spans residues 74–82 (GDHLLGTKR). The chain crosses the membrane as a helical span at residues 83–103 (TMVLGAVVLAAGYFATGLSLY). At 104–106 (QPN) the chain is on the periplasmic side. The helical transmembrane segment at 107-127 (LIFFALGTIAVGNGLFKANPA) threads the bilayer. At 128-146 (SLLSKCYPPKDPRLDGAFT) the chain is on the cytoplasmic side. The helical transmembrane segment at 147–167 (LFYMSINIGSLLSLSLAPVIA) threads the bilayer. The Periplasmic portion of the chain corresponds to 168 to 169 (ER). A helical membrane pass occupies residues 170-190 (FGYTVTYYLCGIGLIFALLVY). Over 191 to 212 (FCCRHMVRHIGSEPDTKPLNWR) the chain is Cytoplasmic. Helical transmembrane passes span 213–233 (NLLL…WLMN) and 234–254 (HVFI…FIFF). The Cytoplasmic portion of the chain corresponds to 255–267 (REASKQDRLGRNK). The chain crosses the membrane as a helical span at residues 268–288 (MFVAFILMIEAIVFYVLYAQM). Residues 289-311 (PTSLNFFAINNVHHEILGFSINP) lie on the Periplasmic side of the membrane. The chain crosses the membrane as a helical span at residues 312 to 332 (VSFQALNPFWVVVASPILASI). Residues 333-350 (YTRLGSQNRDLSMPAKFT) lie on the Cytoplasmic side of the membrane. Residues 351–371 (LGMFLCSLGFLTAAAAGMWFA) form a helical membrane-spanning segment. Over 372–379 (DAQGLTSP) the chain is Periplasmic. A helical transmembrane segment spans residues 380–400 (WFIVLVYLFQSLGELMISALG). Over 401–424 (LAMVAALVPQYLMGFILGMWFLTQ) the chain is Cytoplasmic. The chain crosses the membrane as a helical span at residues 425–445 (AASFLIGGYVATFTATPEGMT). Topologically, residues 446–456 (DPLETLPIYTD) are periplasmic. A helical membrane pass occupies residues 457 to 477 (VFGKIGMVTLVIALVMALLIP). At 478–493 (WLNRMINSSAAEDAVA) the chain is on the cytoplasmic side.

Belongs to the major facilitator superfamily. Proton-dependent oligopeptide transporter (POT/PTR) (TC 2.A.17) family. DtpB subfamily.

The protein localises to the cell inner membrane. In terms of biological role, proton-dependent permease that transports di- and tripeptides. The polypeptide is Dipeptide and tripeptide permease B (Yersinia enterocolitica serotype O:8 / biotype 1B (strain NCTC 13174 / 8081)).